The sequence spans 419 residues: UDP-N-acetylglucosamine 1-carboxyvinyltransferase (419 aa).

Position 22-23 (22-23 (KN)) interacts with phosphoenolpyruvate. Arginine 95 provides a ligand contact to UDP-N-acetyl-alpha-D-glucosamine. Cysteine 119 functions as the Proton donor in the catalytic mechanism. Cysteine 119 carries the post-translational modification 2-(S-cysteinyl)pyruvic acid O-phosphothioketal. UDP-N-acetyl-alpha-D-glucosamine is bound by residues 164 to 167 (KVSV), aspartate 308, and isoleucine 330.

The protein belongs to the EPSP synthase family. MurA subfamily.

The protein localises to the cytoplasm. The catalysed reaction is phosphoenolpyruvate + UDP-N-acetyl-alpha-D-glucosamine = UDP-N-acetyl-3-O-(1-carboxyvinyl)-alpha-D-glucosamine + phosphate. The protein operates within cell wall biogenesis; peptidoglycan biosynthesis. In terms of biological role, cell wall formation. Adds enolpyruvyl to UDP-N-acetylglucosamine. The polypeptide is UDP-N-acetylglucosamine 1-carboxyvinyltransferase (Rickettsia prowazekii (strain Madrid E)).